Here is an 883-residue protein sequence, read N- to C-terminus: Alanine--tRNA ligase (883 aa).

Residues H565, H569, C675, and H679 each coordinate Zn(2+).

The protein belongs to the class-II aminoacyl-tRNA synthetase family. It depends on Zn(2+) as a cofactor.

The protein localises to the cytoplasm. It catalyses the reaction tRNA(Ala) + L-alanine + ATP = L-alanyl-tRNA(Ala) + AMP + diphosphate. Functionally, catalyzes the attachment of alanine to tRNA(Ala) in a two-step reaction: alanine is first activated by ATP to form Ala-AMP and then transferred to the acceptor end of tRNA(Ala). Also edits incorrectly charged Ser-tRNA(Ala) and Gly-tRNA(Ala) via its editing domain. The protein is Alanine--tRNA ligase of Rhodospirillum rubrum (strain ATCC 11170 / ATH 1.1.1 / DSM 467 / LMG 4362 / NCIMB 8255 / S1).